A 77-amino-acid polypeptide reads, in one-letter code: Large ribosomal subunit protein uL29 (77 aa).

Belongs to the universal ribosomal protein uL29 family.

The protein is Large ribosomal subunit protein uL29 of Mycobacterium avium (strain 104).